Reading from the N-terminus, the 82-residue chain is UPF0154 protein SPD_1662 (82 aa).

The helical transmembrane segment at Leu-5–Val-25 threads the bilayer.

It belongs to the UPF0154 family.

It localises to the cell membrane. This is UPF0154 protein SPD_1662 from Streptococcus pneumoniae serotype 2 (strain D39 / NCTC 7466).